Reading from the N-terminus, the 125-residue chain is Large ribosomal subunit protein bL12 (125 aa).

Belongs to the bacterial ribosomal protein bL12 family. Homodimer. Part of the ribosomal stalk of the 50S ribosomal subunit. Forms a multimeric L10(L12)X complex, where L10 forms an elongated spine to which 2 to 4 L12 dimers bind in a sequential fashion. Binds GTP-bound translation factors.

Functionally, forms part of the ribosomal stalk which helps the ribosome interact with GTP-bound translation factors. Is thus essential for accurate translation. This is Large ribosomal subunit protein bL12 from Mannheimia succiniciproducens (strain KCTC 0769BP / MBEL55E).